Consider the following 89-residue polypeptide: uncharacterized protein (89 aa).

To Rhizobium NGR234A y4oN.

This is an uncharacterized protein from Sinorhizobium fredii (strain NBRC 101917 / NGR234).